Consider the following 229-residue polypeptide: Putative ABC transporter permease protein ORF1 (229 aa).

Residues 23–214 (ALNSLLVALA…LPSLAFFALV (192 aa)) form the ABC transmembrane type-1 domain. Transmembrane regions (helical) follow at residues 27-47 (LLVA…MAYV), 62-82 (WVVV…FLVL), 91-111 (LTGL…WMLA), 150-170 (ATAL…LVLL), and 194-214 (SPAG…FALV).

It belongs to the binding-protein-dependent transport system permease family. MalFG subfamily.

It localises to the cell membrane. In terms of biological role, may participate in oleandomycin secretion during antibiotic production. This is Putative ABC transporter permease protein ORF1 from Streptomyces antibioticus.